The following is a 579-amino-acid chain: Tetratricopeptide repeat protein 39C (579 aa).

Polar residues predominate over residues 182-197; the sequence is QQGALASDQANHNTST. Positions 182–202 are disordered; it reads QQGALASDQANHNTSTGSGGR. 3 TPR repeats span residues 311–344, 349–382, and 481–514; these read SLFI…ASDQ, HVCL…SRWS, and GLKH…EYGR.

It belongs to the TTC39 family.

This chain is Tetratricopeptide repeat protein 39C (ttc39c), found in Danio rerio (Zebrafish).